The following is a 170-amino-acid chain: Thialysine N-epsilon-acetyltransferase (170 aa).

Positions 4–168 (VRIREAKEGD…FQGEATRKLA (165 aa)) constitute an N-acetyltransferase domain. 27-28 (FE) is a binding site for substrate. Lysine 29 is subject to N6-acetyllysine. Residue glutamate 92 coordinates substrate. Acetyl-CoA contacts are provided by residues 94–96 (IYV), 102–107 (GQGIGS), 133–135 (NQR), and tyrosine 140. The Proton donor role is filled by tyrosine 140. Glutamate 152 serves as a coordination point for substrate.

The protein belongs to the acetyltransferase family. In terms of assembly, homodimer. As to expression, widely expressed. Under physiological conditions, SSAT2 is expressed at lower level that SSAT1 (SSAT). Many tissues express only SSAT1, several tissues express both SSAT1 and SSAT2, and bone, cervix, ovary and pineal gland expressed only SSAT2.

The protein localises to the cytoplasm. It carries out the reaction S-(2-aminoethyl)-L-cysteine + acetyl-CoA = S-(2-acetamidoethyl)-L-cysteine + CoA + H(+). The catalysed reaction is an alkane-alpha,omega-diamine + acetyl-CoA = an N-acetylalkane-alpha,omega-diamine + CoA + H(+). Its function is as follows. Catalyzes the N-acetylation of the amino acid thialysine (S-(2-aminoethyl)-L-cysteine), a L-lysine analog with the 4-methylene group substituted with a sulfur. May also catalyze acetylation of polyamines, such as norspermidine, spermidine or spermine. However, ability to acetylate polyamines is weak, suggesting that it does not act as a diamine acetyltransferase in vivo. This Homo sapiens (Human) protein is Thialysine N-epsilon-acetyltransferase.